The following is a 264-amino-acid chain: Ubiquinone biosynthesis protein COQ4 homolog, mitochondrial (264 aa).

Residues 1–26 (MMQRCWQISLPLARRRLIPSLTSKRT) constitute a mitochondrion transit peptide. Zn(2+)-binding residues include H169, D170, H173, and E185.

This sequence belongs to the COQ4 family. As to quaternary structure, component of a multi-subunit COQ enzyme complex. Zn(2+) serves as cofactor.

It localises to the mitochondrion inner membrane. The catalysed reaction is a 4-hydroxy-3-methoxy-5-(all-trans-polyprenyl)benzoate + H(+) = a 2-methoxy-6-(all-trans-polyprenyl)phenol + CO2. It participates in cofactor biosynthesis; ubiquinone biosynthesis. Functionally, lyase that catalyzes the C1-decarboxylation of 4-hydroxy-3-methoxy-5-(all-trans-polyprenyl)benzoic acid into 2-methoxy-6-(all-trans-polyprenyl)phenol during ubiquinone biosynthesis. In Drosophila grimshawi (Hawaiian fruit fly), this protein is Ubiquinone biosynthesis protein COQ4 homolog, mitochondrial.